Reading from the N-terminus, the 696-residue chain is MSTGSSPFVDHKSNNSTISINNNSSILNESSISKAYVSKLEFQLDTIKTENRILQQEKDQITSDYRKIIDEKNQELENLKLNFKYVYDEKNQLESKLTNQEQVSTNNINQLSDEIQTYKRENLKLTKDYNSLLDKFNKLNRKNQQIMHDLNKEIEVNDKLHQELKIKEKTNQELQKASDTAINELEQYSKILDKKNGSDNLLYKNLTTKSNNLQNINHQLQNKIDQLLQNKTSNELLKQQNQSLLHKLQNLENIESKYLQLEIEKLQLETKYNDLFKALDTAIASSNEYKDNENTDDTIHTSKVKSFIEYCNNLQAKNLTLQEKYDSKIIQVKELTKELEDHAREIETDFLPTITDLESKLKVYADQNTKLERTKSLREKEITFLRNSLKQMEQIHANQQHKQQEQEKEENTENKSISQYMTNLEKLVDEYKTKIDELEKKNLEYNKSSIITNEKTPSNKRQRLESNYTFKTQAIELEKENIEISSKLKQAESTIEQLKFKISELDKVETRKEQYRILQLKNNLISQDQFIKQTTLIALRKENEELINKYIKNLPIEEQIPKGVFQRQEDDKQRLQAQIDHLTKRSTRLREVFTKKSKDIITVIAKYFGFIIEFLPNPINPTDLFSRIKLRSRYIPSEEDCYLIIDVENRGLKAHGNFQFKQICEELAQYWVNENNQFPCLLSAVNLKLYEIYASK.

Disordered regions lie at residues 1–22 (MSTG…SINN) and 394–415 (QIHA…TENK). The segment covering 402 to 413 (KQQEQEKEENTE) has biased composition (basic and acidic residues).

Belongs to the MAD1 family. As to quaternary structure, component of the mitotic checkpoint complex (MCC).

The protein resides in the nucleus. Its function is as follows. Central component of the spindle assembly checkpoint which is a feedback control that prevents cells with incompletely assembled spindles from leaving mitosis. This Candida albicans (strain SC5314 / ATCC MYA-2876) (Yeast) protein is Spindle assembly checkpoint component MAD1.